Consider the following 452-residue polypeptide: Pup--protein ligase (452 aa).

Residue glutamate 9 participates in Mg(2+) binding. Arginine 53 is an ATP binding site. Residue tyrosine 55 coordinates Mg(2+). Aspartate 57 acts as the Proton acceptor in catalysis. Residue glutamate 63 participates in Mg(2+) binding. ATP-binding residues include threonine 66 and tryptophan 419.

The protein belongs to the Pup ligase/Pup deamidase family. Pup-conjugating enzyme subfamily.

It carries out the reaction ATP + [prokaryotic ubiquitin-like protein]-L-glutamate + [protein]-L-lysine = ADP + phosphate + N(6)-([prokaryotic ubiquitin-like protein]-gamma-L-glutamyl)-[protein]-L-lysine.. It participates in protein degradation; proteasomal Pup-dependent pathway. The protein operates within protein modification; protein pupylation. Catalyzes the covalent attachment of the prokaryotic ubiquitin-like protein modifier Pup to the proteasomal substrate proteins, thereby targeting them for proteasomal degradation. This tagging system is termed pupylation. The ligation reaction involves the side-chain carboxylate of the C-terminal glutamate of Pup and the side-chain amino group of a substrate lysine. In Mycobacterium avium (strain 104), this protein is Pup--protein ligase.